Here is a 298-residue protein sequence, read N- to C-terminus: Ribosomal RNA small subunit methyltransferase H (298 aa).

S-adenosyl-L-methionine is bound by residues glycine 38–histidine 40, aspartate 57, phenylalanine 84, aspartate 100, and glutamine 107.

Belongs to the methyltransferase superfamily. RsmH family.

It is found in the cytoplasm. It carries out the reaction cytidine(1402) in 16S rRNA + S-adenosyl-L-methionine = N(4)-methylcytidine(1402) in 16S rRNA + S-adenosyl-L-homocysteine + H(+). In terms of biological role, specifically methylates the N4 position of cytidine in position 1402 (C1402) of 16S rRNA. This chain is Ribosomal RNA small subunit methyltransferase H, found in Acaryochloris marina (strain MBIC 11017).